Consider the following 82-residue polypeptide: Small ribosomal subunit protein eS21y (82 aa).

N-acetylmethionine is present on Met-1.

The protein belongs to the eukaryotic ribosomal protein eS21 family.

This is Small ribosomal subunit protein eS21y (RPS21C) from Arabidopsis thaliana (Mouse-ear cress).